Reading from the N-terminus, the 449-residue chain is Glutamyl-tRNA reductase (449 aa).

Substrate-binding positions include 48–51 (TCNR), Ser99, 104–106 (EDQ), and Gln110. Catalysis depends on Cys49, which acts as the Nucleophile. 179-184 (GAGEIG) contributes to the NADP(+) binding site.

This sequence belongs to the glutamyl-tRNA reductase family. As to quaternary structure, homodimer.

The catalysed reaction is (S)-4-amino-5-oxopentanoate + tRNA(Glu) + NADP(+) = L-glutamyl-tRNA(Glu) + NADPH + H(+). The protein operates within porphyrin-containing compound metabolism; protoporphyrin-IX biosynthesis; 5-aminolevulinate from L-glutamyl-tRNA(Glu): step 1/2. Catalyzes the NADPH-dependent reduction of glutamyl-tRNA(Glu) to glutamate 1-semialdehyde (GSA). This is Glutamyl-tRNA reductase from Methanosarcina barkeri (strain Fusaro / DSM 804).